We begin with the raw amino-acid sequence, 242 residues long: Histone-lysine N-methyltransferase set-1 (242 aa).

The segment at 1–61 (MKVAAKKLAT…TRSRKGVSVK (61 aa)) is disordered. Over residues 30–43 (SENPSSLASHSSSS) the composition is skewed to low complexity. The SET domain maps to 104-226 (RLLEVYKDVV…QGEELLYDYG (123 aa)). S-adenosyl-L-methionine-binding positions include 114 to 116 (KGR), Tyr159, and 186 to 187 (NH).

Belongs to the class V-like SAM-binding methyltransferase superfamily. Histone-lysine methyltransferase family. PR/SET subfamily. In embryos, it is expressed ubiquitously. In late embryos, it is expressed in hypodermal seam cells. In L3 and L4 larvae and thereafter, it is expressed in vulval precursor cells. In adult males, it is also expressed in 6 unidentified posterior cells.

The protein resides in the nucleus. Its subcellular location is the chromosome. It catalyses the reaction L-lysyl(20)-[histone H4] + S-adenosyl-L-methionine = N(6)-methyl-L-lysyl(20)-[histone H4] + S-adenosyl-L-homocysteine + H(+). In terms of biological role, histone methyltransferase that specifically monomethylates 'Lys-20' of histone H4 (H4K20me1). H4K20me1 is enriched on hermaphrodite X chromosomes and during mitosis. Involved in dosage compensation by repression of X-linked gene expression in hermaphrodites. Plays a role in growth and body fat regulation downstream of the TOR complex 2 pathway. The sequence is that of Histone-lysine N-methyltransferase set-1 (set-1) from Caenorhabditis elegans.